The sequence spans 181 residues: Thymidine kinase (181 aa).

Residue 13–20 (GPMFSGKS) coordinates ATP. Glutamate 85 acts as the Proton acceptor in catalysis. Phenylalanine 115 serves as a coordination point for substrate. Positions 140 and 143 each coordinate Zn(2+). Substrate is bound at residue 159 to 163 (IEIIG). Residues cysteine 172 and cysteine 175 each contribute to the Zn(2+) site.

This sequence belongs to the thymidine kinase family.

It carries out the reaction thymidine + ATP = dTMP + ADP + H(+). This chain is Thymidine kinase (TK), found in Yaba monkey tumor virus (strain VR587) (YMTV).